The following is a 491-amino-acid chain: Lysosomal Pro-X carboxypeptidase (491 aa).

The first 17 residues, 1–17 (MGCRALLLLSFLLLGAA), serve as a signal peptide directing secretion. Residues 18-43 (TTIPPRLKTLGSPHLSASPTPDPAVA) constitute a propeptide that is removed on maturation. Asn-99 is a glycosylation site (N-linked (GlcNAc...) asparagine). Ser-177 serves as the catalytic Charge relay system. The tract at residues 192-332 (HIVVGALAAS…QNIFQALSVY (141 aa)) is SKS domain. Cystine bridges form between Cys-213–Cys-370, Cys-231–Cys-308, Cys-262–Cys-341, and Cys-362–Cys-392. Asn-315, Asn-334, and Asn-343 each carry an N-linked (GlcNAc...) asparagine glycan. The N-linked (GlcNAc...) asparagine glycan is linked to Asn-413. Active-site charge relay system residues include Asp-428 and His-453.

This sequence belongs to the peptidase S28 family. Homodimer.

The protein resides in the lysosome. The catalysed reaction is Cleavage of a -Pro-|-Xaa bond to release a C-terminal amino acid.. Its function is as follows. Cleaves C-terminal amino acids linked to proline in peptides such as angiotensin II, III and des-Arg9-bradykinin. This cleavage occurs at acidic pH, but enzymatic activity is retained with some substrates at neutral pH. The chain is Lysosomal Pro-X carboxypeptidase (Prcp) from Mus musculus (Mouse).